A 225-amino-acid chain; its full sequence is Futalosine hydrolase (225 aa).

The protein belongs to the PNP/UDP phosphorylase family. Futalosine hydrolase subfamily. In terms of assembly, homotetramer.

The catalysed reaction is futalosine + H2O = dehypoxanthine futalosine + hypoxanthine. The protein operates within quinol/quinone metabolism; menaquinone biosynthesis. With respect to regulation, no enhancing of inhibitory effects are observed with divalent metal ions. Slightly inhibited by hypoxanthine. Catalyzes the hydrolysis of futalosine (FL) to dehypoxanthine futalosine (DHFL) and hypoxanthine, a step in the biosynthesis of menaquinone (MK, vitamin K2). Is highly specific to futalosine since it does not accept aminodeoxyfutalosine (AFL), or any structurally related nucleotides and nucleosides as substrate. This chain is Futalosine hydrolase, found in Thermus thermophilus (strain ATCC 27634 / DSM 579 / HB8).